A 429-amino-acid polypeptide reads, in one-letter code: GTPase Obg (429 aa).

Residues 1-158 (MFVDQVKIYV…RNVQLELKVL (158 aa)) enclose the Obg domain. A disordered region spans residues 124–145 (RGNKRFATPANPAPELSENGEP). Residues 159–329 (ADVGLVGFPS…LLLAIADKLE (171 aa)) form the OBG-type G domain. GTP contacts are provided by residues 165–172 (GFPSVGKS), 190–194 (FTTIV), 212–215 (DLPG), 282–285 (NKMD), and 310–312 (SAV). 2 residues coordinate Mg(2+): serine 172 and threonine 192. An OCT domain is found at 351-429 (KYIAEEPDFE…LLDYEFEFMD (79 aa)).

Belongs to the TRAFAC class OBG-HflX-like GTPase superfamily. OBG GTPase family. Monomer. Mg(2+) serves as cofactor.

It localises to the cytoplasm. Functionally, an essential GTPase which binds GTP, GDP and possibly (p)ppGpp with moderate affinity, with high nucleotide exchange rates and a fairly low GTP hydrolysis rate. Plays a role in control of the cell cycle, stress response, ribosome biogenesis and in those bacteria that undergo differentiation, in morphogenesis control. This Listeria welshimeri serovar 6b (strain ATCC 35897 / DSM 20650 / CCUG 15529 / CIP 8149 / NCTC 11857 / SLCC 5334 / V8) protein is GTPase Obg.